The sequence spans 547 residues: Chaperonin GroEL (547 aa).

ATP-binding positions include 30–33 (TLGP), K51, 87–91 (DGTTT), G415, and D495. The tract at residues 525-547 (PDEKEAGGGAPDMGGMGGMGGMM) is disordered. Gly residues predominate over residues 531–547 (GGGAPDMGGMGGMGGMM).

The protein belongs to the chaperonin (HSP60) family. As to quaternary structure, forms a cylinder of 14 subunits composed of two heptameric rings stacked back-to-back. Interacts with the co-chaperonin GroES.

It localises to the cytoplasm. It carries out the reaction ATP + H2O + a folded polypeptide = ADP + phosphate + an unfolded polypeptide.. In terms of biological role, together with its co-chaperonin GroES, plays an essential role in assisting protein folding. The GroEL-GroES system forms a nano-cage that allows encapsulation of the non-native substrate proteins and provides a physical environment optimized to promote and accelerate protein folding. This is Chaperonin GroEL from Chromohalobacter salexigens (strain ATCC BAA-138 / DSM 3043 / CIP 106854 / NCIMB 13768 / 1H11).